A 353-amino-acid chain; its full sequence is MTQGQKVSVGIVGASGYGGVQLVRLLKEHPLVELAYLGGDSSAGKPYSDLYPHLGHSINLNVEAIDLEIIASRCQVVFLGLPNGLACDLAPPLLAKGCKVLDLSADYRFTSLDTYSKWYGKERQDQAIASTAVYGLPELYREDIKNASLIGCPGCYPTASLMAISPLLKQGLIVPETTIIDAKSGTSGGGRQAKINMLLAEADSSIGAYNVAGKHRHTPEIEQICGDLAGHEVRVQFTPHLMPMVRGILSTVYATLRDPNLVRDDLITIYNAFYRASPFVKILPGGVYPQTKWACGTNLCYLGIEVDPRTDRVIVMSAIDNLVKGQSGQAVQCLNLMMGWEESLALPQMCFYP.

Cysteine 155 is an active-site residue.

It belongs to the NAGSA dehydrogenase family. Type 1 subfamily.

The protein localises to the cytoplasm. The catalysed reaction is N-acetyl-L-glutamate 5-semialdehyde + phosphate + NADP(+) = N-acetyl-L-glutamyl 5-phosphate + NADPH + H(+). Its pathway is amino-acid biosynthesis; L-arginine biosynthesis; N(2)-acetyl-L-ornithine from L-glutamate: step 3/4. Functionally, catalyzes the NADPH-dependent reduction of N-acetyl-5-glutamyl phosphate to yield N-acetyl-L-glutamate 5-semialdehyde. The sequence is that of N-acetyl-gamma-glutamyl-phosphate reductase from Microcystis aeruginosa (strain NIES-843 / IAM M-2473).